Here is a 103-residue protein sequence, read N- to C-terminus: Histone H4 (103 aa).

The span at 1–14 (MSGRGKGGKGLGKG) shows a compositional bias: gly residues. A disordered region spans residues 1-20 (MSGRGKGGKGLGKGGAKRHR). The residue at position 2 (Ser2) is an N-acetylserine. 2 positions are modified to N6-acetyl-N6-methyllysine; alternate: Lys6 and Lys13. Lys17 is subject to N6-acetyllysine. A DNA-binding region spans residues 17–21 (KRHRK). Lys21 carries the N6-methyllysine modification.

It belongs to the histone H4 family. As to quaternary structure, the nucleosome is a histone octamer containing two molecules each of H2A, H2B, H3 and H4 assembled in one H3-H4 heterotetramer and two H2A-H2B heterodimers. The octamer wraps approximately 147 bp of DNA.

The protein resides in the nucleus. The protein localises to the chromosome. Core component of nucleosome. Nucleosomes wrap and compact DNA into chromatin, limiting DNA accessibility to the cellular machineries which require DNA as a template. Histones thereby play a central role in transcription regulation, DNA repair, DNA replication and chromosomal stability. DNA accessibility is regulated via a complex set of post-translational modifications of histones, also called histone code, and nucleosome remodeling. The polypeptide is Histone H4 (H4DEKL) (Dendronephthya klunzingeri (Klunzinger's soft coral)).